The chain runs to 183 residues: Photosystem I assembly protein Ycf4 (183 aa).

The next 2 membrane-spanning stretches (helical) occupy residues 21 to 43 and 58 to 80; these read YWWA…SSRL and FIPQ…TYLW.

This sequence belongs to the Ycf4 family.

It is found in the plastid. The protein resides in the chloroplast thylakoid membrane. Its function is as follows. Seems to be required for the assembly of the photosystem I complex. The sequence is that of Photosystem I assembly protein Ycf4 from Nephroselmis olivacea (Green alga).